Consider the following 255-residue polypeptide: DASH complex subunit SPC34 (255 aa).

Residues 53–81 form a disordered region; it reads LFSVPPPPPRQTTLTAEQQQQQKPSNRRQ. Residues 63–81 show a composition bias toward polar residues; that stretch reads QTTLTAEQQQQQKPSNRRQ. A coiled-coil region spans residues 176–248; that stretch reads LAYYEAKIAE…QARLRALDAD (73 aa).

This sequence belongs to the DASH complex SPC34 family. Component of the DASH complex consisting of ASK1, DAD1, DAD2, DAD3, DAD4, DAM1, DUO1, HSK3, SPC19 and SPC34, with a stoichiometry of one copy of each subunit per complex. Multiple DASH complexes oligomerize to form a ring that encircles spindle microtubules and organizes the rod-like NDC80 complexes of the outer kinetochore of the outer kinetochore. DASH complex oligomerization strengthens microtubule attachments. On cytoplasmic microtubules, DASH complexes appear to form patches instead of rings.

It localises to the nucleus. Its subcellular location is the cytoplasm. The protein localises to the cytoskeleton. It is found in the spindle. The protein resides in the chromosome. It localises to the centromere. Its subcellular location is the kinetochore. Functionally, component of the DASH complex that connects microtubules with kinetochores and couples microtubule depolymerisation to chromosome movement; it is involved in retrieving kinetochores to the spindle poles before their re-orientation on the spindle in early mitosis and allows microtubule depolymerization to pull chromosomes apart and resist detachment during anaphase. Kinetochores, consisting of a centromere-associated inner segment and a microtubule-contacting outer segment, play a crucial role in chromosome segregation by mediating the physical connection between centromeric DNA and microtubules. Kinetochores also serve as an input point for the spindle assembly checkpoint, which delays anaphase until all chromosomes have bioriented on the mitotic spindle. The polypeptide is DASH complex subunit SPC34 (Chaetomium thermophilum (strain DSM 1495 / CBS 144.50 / IMI 039719) (Thermochaetoides thermophila)).